The sequence spans 256 residues: Venom allergen-1 (256 aa).

The N-terminal stretch at 1–21 (MAFNGIALLITATIFIGSCYA) is a signal peptide. Positions 65–211 (LNTHNKLRAE…MINYYLVCNY (147 aa)) constitute an SCP domain. N-linked (GlcNAc...) asparagine glycosylation is found at Asn146 and Asn210.

This sequence belongs to the CRISP family.

The protein resides in the secreted. Activates autophagy in human monocytic cells, dendritic cells and macrophages. Its function is as follows. (Microbial infection) Promotes Zika virus replication in human dendritic cells and macrophages. Facilitates Zika virus transmission from infected mosquitoes to the host in mouse model. This chain is Venom allergen-1, found in Aedes albopictus (Asian tiger mosquito).